The sequence spans 63 residues: Large ribosomal subunit protein bL28 (63 aa).

This sequence belongs to the bacterial ribosomal protein bL28 family.

This chain is Large ribosomal subunit protein bL28, found in Sulfurihydrogenibium sp. (strain YO3AOP1).